The primary structure comprises 829 residues: UBA domain-containing protein 8 (829 aa).

The region spanning 10 to 109 (EQQEFDRLLE…KQAKDDHHIK (100 aa)) is the EH 1 domain. Positions 43–78 (LPQKILAKIWDYCDQEDKGSLDRNQVYACFRLISQA) constitute an EF-hand 1 domain. Positions 93 to 121 (GDPPILPKQAKDDHHIKRSSSETADFTPF) are disordered. A phosphoserine mark is found at Ser112 and Ser113. EH domains lie at 129 to 225 (ERSE…AKSE) and 300 to 398 (DRSN…SDDT). The EF-hand 2 domain maps to 333-368 (LDSEELARIWDTVDTQDRGYIDKDEFAVAMEIIKLR). Polar residues-rich tracts occupy residues 466–506 (SFQD…TQSI) and 574–590 (TIPG…QTTE). Disordered stretches follow at residues 466–520 (SFQD…VNSS), 574–614 (TIPG…MRKL), and 724–785 (KPQV…QSYE). Residues 602–709 (EPTEEEQEEM…AKIDSIIADS (108 aa)) adopt a coiled-coil conformation. Over residues 728 to 737 (TPAPPTPAPT) the composition is skewed to pro residues. Over residues 764–774 (HANSSTPMNYV) the composition is skewed to polar residues. The span at 775 to 785 (SQPESPPQSYE) shows a compositional bias: low complexity. One can recognise a UBA domain in the interval 788 to 828 (QNDNELLQELLSMGFPREKAVIALEATNYDVNEAANILLSS).

This is UBA domain-containing protein 8 (ucp8) from Schizosaccharomyces pombe (strain 972 / ATCC 24843) (Fission yeast).